The sequence spans 143 residues: Large ribosomal subunit protein uL11 (143 aa).

It belongs to the universal ribosomal protein uL11 family. In terms of assembly, part of the ribosomal stalk of the 50S ribosomal subunit. Interacts with L10 and the large rRNA to form the base of the stalk. L10 forms an elongated spine to which L12 dimers bind in a sequential fashion forming a multimeric L10(L12)X complex. In terms of processing, one or more lysine residues are methylated.

In terms of biological role, forms part of the ribosomal stalk which helps the ribosome interact with GTP-bound translation factors. This is Large ribosomal subunit protein uL11 from Pseudomonas paraeruginosa (strain DSM 24068 / PA7) (Pseudomonas aeruginosa (strain PA7)).